A 1408-amino-acid chain; its full sequence is ABC multidrug transporter MDR1 (1408 aa).

Positions 1–13 are enriched in low complexity; it reads MSASPSPIGAAAG. Residues 1–103 are disordered; it reads MSASPSPIGA…SISSAVPKSH (103 aa). The segment covering 17-38 has biased composition (basic and acidic residues); that stretch reads LQARRDEEVVDSEKDALAHDSH. A run of 2 helical transmembrane segments spans residues 147 to 167 and 223 to 243; these read FAAP…IAAG and LYLM…MFIW. Residues 157–464 enclose the ABC transmembrane type-1 1 domain; sequence VFGLLLAIAA…LAPELAAVTK (308 aa). N-linked (GlcNAc...) asparagine glycosylation is present at Asn-244. A run of 4 helical transmembrane segments spans residues 296 to 316, 321 to 341, 408 to 428, and 436 to 456; these read KVAL…LAFV, LAGA…IMMT, IMFF…GILV, and GIVI…AMLA. One can recognise an ABC transporter 1 domain in the interval 499-744; it reads ISFENVRFHY…ENGPYAQLVN (246 aa). An ATP-binding site is contributed by 534–541; that stretch reads GASGSGKS. 2 consecutive transmembrane segments (helical) span residues 838–858 and 882–902; these read IFAF…AILF and LWYF…SAGF. The ABC transmembrane type-1 2 domain occupies 838–1125; that stretch reads IFAFIAAICA…VFTFVPDASK (288 aa). Asn-934 carries N-linked (GlcNAc...) asparagine glycosylation. 4 helical membrane passes run 952–972, 973–993, 1072–1092, and 1099–1119; these read GLFG…IGGC, IIGL…IPIL, GLTF…IIDG, and FYTV…VFTF. 2 N-linked (GlcNAc...) asparagine glycosylation sites follow: Asn-1127 and Asn-1182. Residues 1162–1402 enclose the ABC transporter 2 domain; the sequence is VRIEGVHFRY…KGGYYDLVQM (241 aa). An ATP-binding site is contributed by 1197–1204; that stretch reads GPSGCGKS. The N-linked (GlcNAc...) asparagine glycan is linked to Asn-1404.

It belongs to the ABC transporter superfamily. ABCB family. Multidrug resistance exporter (TC 3.A.1.201) subfamily.

It is found in the cell membrane. It catalyses the reaction itraconazole(in) + ATP + H2O = itraconazole(out) + ADP + phosphate + H(+). The catalysed reaction is voriconazole(in) + ATP + H2O = voriconazole(out) + ADP + phosphate + H(+). It carries out the reaction fluconazole(in) + ATP + H2O = fluconazole(out) + ADP + phosphate + H(+). Pleiotropic ABC efflux transporter that confers resistance to structurally and functionally unrelated compounds including azoles such as fluconazole (FLC), itraconazole (ITC), posaconazole (POS), nocodazole and voriconazole (VRC). This is ABC multidrug transporter MDR1 from Cryptococcus deuterogattii (strain R265) (Cryptococcus gattii VGII (strain R265)).